Here is a 78-residue protein sequence, read N- to C-terminus: Small ribosomal subunit protein uS17 (78 aa).

This sequence belongs to the universal ribosomal protein uS17 family. As to quaternary structure, part of the 30S ribosomal subunit.

Its function is as follows. One of the primary rRNA binding proteins, it binds specifically to the 5'-end of 16S ribosomal RNA. This is Small ribosomal subunit protein uS17 from Sinorhizobium fredii (strain NBRC 101917 / NGR234).